A 393-amino-acid polypeptide reads, in one-letter code: Acyl-homoserine-lactone synthase OpaM (393 aa).

It belongs to the LuxM / VanM family.

It catalyses the reaction a fatty acyl-[ACP] + S-adenosyl-L-methionine = an N-acyl-L-homoserine lactone + S-methyl-5'-thioadenosine + holo-[ACP] + H(+). In Vibrio parahaemolyticus serotype O3:K6 (strain RIMD 2210633), this protein is Acyl-homoserine-lactone synthase OpaM (opaM).